The sequence spans 255 residues: UPF0246 protein CC_3385 (255 aa).

The protein belongs to the UPF0246 family.

This Caulobacter vibrioides (strain ATCC 19089 / CIP 103742 / CB 15) (Caulobacter crescentus) protein is UPF0246 protein CC_3385.